The following is a 368-amino-acid chain: N-acetylneuraminate epimerase (368 aa).

The first 19 residues, 1–19, serve as a signal peptide directing secretion; it reads MNKTITALAILMASFAANA. Kelch repeat units lie at residues 40-84, 86-137, 139-173, 174-219, 222-265, 287-336, and 338-367; these read TVYI…AFID, NLYV…FVHN, KAYVTGGVNQNIFNGYFEDLNEAGKDSTAVDKINA, HYFD…VNKG, TWLI…VAGG, ENYQ…PWNN, and LLIIGGETAGGKAVTDSVLISVKDNKVTVQ. The Proton acceptor role is filled by Glu-228.

The protein belongs to the NanM family. As to quaternary structure, homodimer.

Its subcellular location is the periplasm. It carries out the reaction N-acetyl-alpha-neuraminate = N-acetyl-beta-neuraminate. Converts alpha-N-acetylneuranimic acid (Neu5Ac) to the beta-anomer, accelerating the equilibrium between the alpha- and beta-anomers. Probably facilitates sialidase-negative bacteria to compete successfully for limited amounts of extracellular Neu5Ac, which is likely taken up in the beta-anomer. In addition, the rapid removal of sialic acid from solution might be advantageous to the bacterium to damp down host responses. This is N-acetylneuraminate epimerase from Escherichia coli O157:H7.